The sequence spans 162 residues: Cytochrome c-type biogenesis protein CcmE (162 aa).

Residues Met-1–Arg-8 lie on the Cytoplasmic side of the membrane. A helical; Signal-anchor for type II membrane protein transmembrane segment spans residues Leu-9–Ala-29. At Leu-30 to Lys-162 the chain is on the periplasmic side. Positions 124 and 128 each coordinate heme. Residues Asp-139–Asn-148 are compositionally biased toward basic and acidic residues. Residues Asp-139 to Lys-162 form a disordered region.

It belongs to the CcmE/CycJ family.

It is found in the cell inner membrane. In terms of biological role, heme chaperone required for the biogenesis of c-type cytochromes. Transiently binds heme delivered by CcmC and transfers the heme to apo-cytochromes in a process facilitated by CcmF and CcmH. In Pseudomonas aeruginosa (strain ATCC 15692 / DSM 22644 / CIP 104116 / JCM 14847 / LMG 12228 / 1C / PRS 101 / PAO1), this protein is Cytochrome c-type biogenesis protein CcmE.